The following is a 163-amino-acid chain: MRVLGVDPGMALLGYGVVEGGEPLRALSFGVVSTPAHLPVERRLVVLHDELAQLLEHWQPDVVALEQLFFARNVTTALAVGQARGIVLLLCGQRTIPVVEYTPAQVKQAVGGYGRARKREMQEMVRLLLRLPVLPQPDDAADALALAVCYFQYSRAAQLERFT.

Active-site residues include aspartate 7, glutamate 66, and aspartate 139. Positions 7, 66, and 139 each coordinate Mg(2+).

Belongs to the RuvC family. Homodimer which binds Holliday junction (HJ) DNA. The HJ becomes 2-fold symmetrical on binding to RuvC with unstacked arms; it has a different conformation from HJ DNA in complex with RuvA. In the full resolvosome a probable DNA-RuvA(4)-RuvB(12)-RuvC(2) complex forms which resolves the HJ. Mg(2+) is required as a cofactor.

The protein localises to the cytoplasm. It carries out the reaction Endonucleolytic cleavage at a junction such as a reciprocal single-stranded crossover between two homologous DNA duplexes (Holliday junction).. The RuvA-RuvB-RuvC complex processes Holliday junction (HJ) DNA during genetic recombination and DNA repair. Endonuclease that resolves HJ intermediates. Cleaves cruciform DNA by making single-stranded nicks across the HJ at symmetrical positions within the homologous arms, yielding a 5'-phosphate and a 3'-hydroxyl group; requires a central core of homology in the junction. The consensus cleavage sequence is 5'-(A/T)TT(C/G)-3'. Cleavage occurs on the 3'-side of the TT dinucleotide at the point of strand exchange. HJ branch migration catalyzed by RuvA-RuvB allows RuvC to scan DNA until it finds its consensus sequence, where it cleaves and resolves the cruciform DNA. This chain is Crossover junction endodeoxyribonuclease RuvC, found in Thermomicrobium roseum (strain ATCC 27502 / DSM 5159 / P-2).